A 201-amino-acid polypeptide reads, in one-letter code: Probable quinol oxidase subunit 3 (201 aa).

Helical transmembrane passes span 20 to 40, 62 to 82, 91 to 111, 133 to 153, and 172 to 192; these read LGFW…FATL, LVLI…IAIY, LMMF…GFEI, FFIL…WAIC, and FIVS…FTAV.

This sequence belongs to the cytochrome c oxidase subunit 3 family.

Its subcellular location is the cell membrane. It catalyses the reaction 2 a quinol + O2 = 2 a quinone + 2 H2O. In terms of biological role, catalyzes quinol oxidation with the concomitant reduction of oxygen to water. The polypeptide is Probable quinol oxidase subunit 3 (qoxC) (Staphylococcus aureus (strain MSSA476)).